A 111-amino-acid chain; its full sequence is uncharacterized protein (111 aa).

This is an uncharacterized protein from Streptomyces coelicolor (strain ATCC BAA-471 / A3(2) / M145).